The chain runs to 141 residues: Large ribosomal subunit protein uL11 (141 aa).

This sequence belongs to the universal ribosomal protein uL11 family. As to quaternary structure, part of the ribosomal stalk of the 50S ribosomal subunit. Interacts with L10 and the large rRNA to form the base of the stalk. L10 forms an elongated spine to which 2 L12 dimers bind in a sequential fashion forming a pentameric L10(L12)2(L12)2 complex. In stalled/isolated 50S subunits interacts with RqcH. One or more lysine residues are methylated.

In terms of biological role, forms part of the ribosomal stalk which helps the ribosome interact with GTP-bound translation factors. Required to recruit RqcH, which is part of the ribosome quality control system (RQC), to stalled 50S ribosomal subunits. The polypeptide is Large ribosomal subunit protein uL11 (Bacillus subtilis (strain 168)).